The primary structure comprises 346 residues: D-erythrose-4-phosphate dehydrogenase (346 aa).

Position 11 to 12 (11 to 12) interacts with NAD(+); that stretch reads RI. Substrate-binding positions include 163 to 165, R209, 222 to 223, and R245; these read SCT and TK. The active-site Nucleophile is C164. An NAD(+)-binding site is contributed by N327.

This sequence belongs to the glyceraldehyde-3-phosphate dehydrogenase family. Epd subfamily. As to quaternary structure, homotetramer.

It is found in the cytoplasm. It carries out the reaction D-erythrose 4-phosphate + NAD(+) + H2O = 4-phospho-D-erythronate + NADH + 2 H(+). It participates in cofactor biosynthesis; pyridoxine 5'-phosphate biosynthesis; pyridoxine 5'-phosphate from D-erythrose 4-phosphate: step 1/5. Catalyzes the NAD-dependent conversion of D-erythrose 4-phosphate to 4-phosphoerythronate. This Vibrio vulnificus (strain YJ016) protein is D-erythrose-4-phosphate dehydrogenase.